The chain runs to 403 residues: MNITGVIVEYNPFHNGHLYHLNKTKEITDCDGIVAVMSGHFVQRGSPALLDKWTRAKLALLNGVDLVLELPTIYSTSSAEFFAYGATSLLDGINIVNNLCFGSELGNIDIILKTSKILQEEPLSFKEDLKNFIDKGISFPNAREKALINFMRKGKNSFDFNNVLCLSNNILALEYCKNLFKINSNIKPFTVKRQGSHYNCLHLRDNLSSATAIREYIGNNENLDNLVKSVPETVLNMLKNFQNEQCKFPFEEDMFTYIKHKYFSNTGSIENLPDVSEGIHNRIYRALDTCNTLKEAMDMIKTKRYTYTRIKRILCHYFIGMDMINSDELRRKPCPYARILGFNRKGQDILKLIKKSSNIPIINKIPKKIDSTLNLDINATKCYSLLNKKVNPLDDFLKKPVLK.

ATP is bound by residues 7–20 (IVEY…HLYH), Gly102, Asn168, and Arg193.

It belongs to the TmcAL family.

It localises to the cytoplasm. It carries out the reaction cytidine(34) in elongator tRNA(Met) + acetate + ATP = N(4)-acetylcytidine(34) in elongator tRNA(Met) + AMP + diphosphate. Catalyzes the formation of N(4)-acetylcytidine (ac(4)C) at the wobble position of elongator tRNA(Met), using acetate and ATP as substrates. First activates an acetate ion to form acetyladenylate (Ac-AMP) and then transfers the acetyl group to tRNA to form ac(4)C34. The protein is tRNA(Met) cytidine acetate ligase of Clostridium tetani (strain Massachusetts / E88).